The chain runs to 131 residues: Classical arabinogalactan protein 2 (131 aa).

Residues 1-21 (MNSKAMQALIFLGFLATSCLA) form the signal peptide. Glutamine 22 is subject to Pyrrolidone carboxylic acid. 4-hydroxyproline occurs at positions 24, 26, 28, 34, and 35. Residues proline 24, proline 26, proline 28, proline 34, and proline 35 are each glycosylated (O-linked (Ara...) hydroxyproline). The segment at 24–106 (PAPAPTTVTP…PGPDGAADAP (83 aa)) is disordered. 2 stretches are compositionally biased toward pro residues: residues 25-38 (APAPTTVTPPPTAL) and 49-64 (IASPPVPVNEPTPAPT). Composition is skewed to low complexity over residues 65 to 76 (TSPTTSPVASPP) and 90 to 106 (TPTSSPAPGPDGAADAP). Residue serine 107 is the site of GPI-anchor amidated serine attachment. Positions 108 to 131 (AAWANKAFLVGTAVAGALYAVVLA) are cleaved as a propeptide — removed in mature form.

The protein belongs to the classical AGP family. Post-translationally, O-glycosylated on hydroxyprolines; noncontiguous hydroxylproline residues are glycosylated with arabinogalactan.

The protein resides in the cell membrane. Proteoglycan that seems to be implicated in diverse developmental roles such as differentiation, cell-cell recognition, embryogenesis and programmed cell death. The polypeptide is Classical arabinogalactan protein 2 (AGP2) (Arabidopsis thaliana (Mouse-ear cress)).